Here is a 332-residue protein sequence, read N- to C-terminus: 4-hydroxythreonine-4-phosphate dehydrogenase (332 aa).

Substrate contacts are provided by His-136 and Thr-137. A divalent metal cation is bound by residues His-166, His-211, and His-266. The substrate site is built by Lys-274, Asn-283, and Arg-292.

This sequence belongs to the PdxA family. Homodimer. The cofactor is Zn(2+). Mg(2+) is required as a cofactor. Co(2+) serves as cofactor.

Its subcellular location is the cytoplasm. The catalysed reaction is 4-(phosphooxy)-L-threonine + NAD(+) = 3-amino-2-oxopropyl phosphate + CO2 + NADH. Its pathway is cofactor biosynthesis; pyridoxine 5'-phosphate biosynthesis; pyridoxine 5'-phosphate from D-erythrose 4-phosphate: step 4/5. Functionally, catalyzes the NAD(P)-dependent oxidation of 4-(phosphooxy)-L-threonine (HTP) into 2-amino-3-oxo-4-(phosphooxy)butyric acid which spontaneously decarboxylates to form 3-amino-2-oxopropyl phosphate (AHAP). The chain is 4-hydroxythreonine-4-phosphate dehydrogenase from Wigglesworthia glossinidia brevipalpis.